The following is a 1299-amino-acid chain: Probable membrane antigen 75 (1299 aa).

The protein resides in the virion tegument. This is Probable membrane antigen 75 (75) from Saimiriine herpesvirus 2 (strain 11) (SaHV-2).